Consider the following 77-residue polypeptide: Translation initiation factor IF-1, chloroplastic (77 aa).

One can recognise an S1-like domain in the interval Met-1–Arg-71.

This sequence belongs to the IF-1 family. Component of the 30S ribosomal translation pre-initiation complex which assembles on the 30S ribosome in the order IF-2 and IF-3, IF-1 and N-formylmethionyl-tRNA(fMet); mRNA recruitment can occur at any time during PIC assembly.

The protein localises to the plastid. The protein resides in the chloroplast. In terms of biological role, one of the essential components for the initiation of protein synthesis. Stabilizes the binding of IF-2 and IF-3 on the 30S subunit to which N-formylmethionyl-tRNA(fMet) subsequently binds. Helps modulate mRNA selection, yielding the 30S pre-initiation complex (PIC). Upon addition of the 50S ribosomal subunit IF-1, IF-2 and IF-3 are released leaving the mature 70S translation initiation complex. The protein is Translation initiation factor IF-1, chloroplastic of Nandina domestica (Heavenly bamboo).